A 380-amino-acid chain; its full sequence is MEPAIKYRLIKKEKHTGARLGELITPHGTFPTPMFMPVGTQASVKSLAPEELDAMGAGVILSNTYHLWLRPGEQIVKEAGGLHQFMNWKKGILTDSGGFQVFSLAKNRDITEEGVHFKNHLNGSKMFLSPEKAIQIENDLGPDIMMSLDECPPFFESYDYVSKSVARTSRWAERGLKVHQHPDYQGLFGIVQGAGFKDLREQSAKDLVSLDFPGYSIGGLSVGESKAEMNHVLDFTTPLLPENKPRYLMGVGSADALIDGAIRGVDMFDCVLPTRIARNGTCMTSHGRLVVKNAAYAHDFTPLDDNCDCYTCRNFTRAYIRHLIKADETFGLRLTSYHNLYFLLHLMKQVRQAIMDDNLLEFRQNFFEMYGFNDKNPKNF.

The active-site Proton acceptor is aspartate 95. Substrate is bound by residues 95–99 (DSGGF), aspartate 149, glutamine 192, and glycine 219. An RNA binding region spans residues 250-256 (GVGSADA). The active-site Nucleophile is the aspartate 269. The tract at residues 274 to 278 (TRIAR) is RNA binding; important for wobble base 34 recognition. Zn(2+) is bound by residues cysteine 307, cysteine 309, cysteine 312, and histidine 338.

This sequence belongs to the queuine tRNA-ribosyltransferase family. Homodimer. Within each dimer, one monomer is responsible for RNA recognition and catalysis, while the other monomer binds to the replacement base PreQ1. The cofactor is Zn(2+).

The enzyme catalyses 7-aminomethyl-7-carbaguanine + guanosine(34) in tRNA = 7-aminomethyl-7-carbaguanosine(34) in tRNA + guanine. Its pathway is tRNA modification; tRNA-queuosine biosynthesis. Its function is as follows. Catalyzes the base-exchange of a guanine (G) residue with the queuine precursor 7-aminomethyl-7-deazaguanine (PreQ1) at position 34 (anticodon wobble position) in tRNAs with GU(N) anticodons (tRNA-Asp, -Asn, -His and -Tyr). Catalysis occurs through a double-displacement mechanism. The nucleophile active site attacks the C1' of nucleotide 34 to detach the guanine base from the RNA, forming a covalent enzyme-RNA intermediate. The proton acceptor active site deprotonates the incoming PreQ1, allowing a nucleophilic attack on the C1' of the ribose to form the product. After dissociation, two additional enzymatic reactions on the tRNA convert PreQ1 to queuine (Q), resulting in the hypermodified nucleoside queuosine (7-(((4,5-cis-dihydroxy-2-cyclopenten-1-yl)amino)methyl)-7-deazaguanosine). This is Queuine tRNA-ribosyltransferase from Lactiplantibacillus plantarum (strain ATCC BAA-793 / NCIMB 8826 / WCFS1) (Lactobacillus plantarum).